We begin with the raw amino-acid sequence, 207 residues long: Large ribosomal subunit protein uL3 (207 aa).

The disordered stretch occupies residues 129-152 (AGGPAGHGSRFQRHPGSIGSNTTP).

Belongs to the universal ribosomal protein uL3 family. In terms of assembly, part of the 50S ribosomal subunit. Forms a cluster with proteins L14 and L19.

One of the primary rRNA binding proteins, it binds directly near the 3'-end of the 23S rRNA, where it nucleates assembly of the 50S subunit. This Leptospira biflexa serovar Patoc (strain Patoc 1 / ATCC 23582 / Paris) protein is Large ribosomal subunit protein uL3.